Consider the following 185-residue polypeptide: Pycsar effector protein EcPycTM (185 aa).

3 consecutive transmembrane segments (helical) span residues 32-52, 63-83, and 141-161; these read ALLL…VGYF, MVIF…SVLL, and FILS…VSWI.

Its subcellular location is the cell inner membrane. Pycsar (pyrimidine cyclase system for antiphage resistance) provides immunity against bacteriophage. The pyrimidine cyclase (PycC) synthesizes cyclic nucleotides in response to infection; these serve as specific second messenger signals. The signals activate the adjacent effector, leading to bacterial cell death and abortive phage infection. A clade E Pycsar system. Its function is as follows. The effector component of a two-gene Pycsar system. Expression of this and adjacent cytidylate cyclase EcPycC (AC P0DV24) confers resistance to bacteriophage P1 and T5; this protein is required for resistance. When cells expressing the Pycsar system are infected by phage T5 at low multiplicity of infection (0.2 MOI) the culture survives, at 2.0 MOI bacteria enter growth arrest. The same cells enter growth arrest after exposure to 250 uM cCMP but not cUMP; this effector protein responds only to cCMP, usually produced by its cognate NTP cyclase. Some of the cells treated with cCMP have abnormal membrane protrusions, probably due to effects on membrane integrity. The sequence is that of Pycsar effector protein EcPycTM from Escherichia coli.